The chain runs to 194 residues: Archaetidylinositol phosphate synthase (194 aa).

The next 2 membrane-spanning stretches (helical) occupy residues 32–51 and 58–78; these read IYTLASPVAAAAALPAWLYI and LLIALSLLLDAVDGAVARFTG. Positions 67, 70, 88, and 92 each coordinate Mg(2+). The active-site Proton acceptor is the Asp-92. Transmembrane regions (helical) follow at residues 103–123, 150–170, and 172–192; these read LYIAGVHPLIVIAMLSGGLIV, IAILAILAISIYNLQTALALA, and AAAVLVWITVIQRMVYIAGEL.

This sequence belongs to the CDP-alcohol phosphatidyltransferase class-I family. It depends on Mn(2+) as a cofactor. The cofactor is Mg(2+).

It localises to the cell membrane. The catalysed reaction is CDP-2,3-bis-O-(phytanyl)-sn-glycerol + 1D-myo-inositol 3-phosphate = saturated 1-archaetidyl-1D-myo-inositol 3-phosphate + CMP + H(+). Its pathway is lipid metabolism; phospholipid metabolism. In terms of biological role, catalyzes the formation of archaetidylinositol phosphate (AIP) from CDP-archaeol (CDP-ArOH or CDP-2,3-bis-(O-phytanyl)-sn-glycerol) and 1L-myo-inositol 1-phosphate (IP or 1D-myo-inositol 3-phosphate). AIP is a precursor of archaetidyl-myo-inositol (AI), an ether-type inositol phospholipid ubiquitously distributed in archaea membranes and essential for glycolipid biosynthesis in archaea. The sequence is that of Archaetidylinositol phosphate synthase from Aeropyrum pernix (strain ATCC 700893 / DSM 11879 / JCM 9820 / NBRC 100138 / K1).